A 463-amino-acid polypeptide reads, in one-letter code: Rubisco accumulation factor 1, chloroplastic (463 aa).

Over residues 1–18 (MLSLSHPHPHPAASTTAP) the composition is skewed to low complexity. A chloroplast-targeting transit peptide spans 1-31 (MLSLSHPHPHPAASTTAPRHQRTAPVWHRRR). The disordered stretch occupies residues 1–84 (MLSLSHPHPH…PFHPPPSPLP (84 aa)). The segment covering 19-33 (RHQRTAPVWHRRRAS) has biased composition (basic residues). The segment covering 43 to 53 (PGGGSTGGRGG) has biased composition (gly residues). The interval 83–275 (LPPSLRNLDL…SGRARVELEL (193 aa)) is N-terminal alpha-helix. Positions 240-294 (RQSREAIDVQDRVAELERALQVVETESGRARVELELERARRKAAGEEEVDEEGEE) form a coiled coil. Residues 305 to 450 (VTVVRLRYGE…AEVVIVVRPP (146 aa)) form a C-terminal beta sheet region.

Belongs to the RAF family. As to quaternary structure, homotrimer. Expressed in bundle sheath.

The protein resides in the plastid. It localises to the chloroplast. Its function is as follows. Required for assembly or stability of RuBisCO. Acts at a postchaperonin step to fold and/or assemble the large subunit (LS) into RuBisCO. This chain is Rubisco accumulation factor 1, chloroplastic, found in Zea mays (Maize).